A 344-amino-acid chain; its full sequence is Arginine N-succinyltransferase (344 aa).

Leucine 125 provides a ligand contact to succinyl-CoA. Catalysis depends on histidine 229, which acts as the Proton donor.

Belongs to the arginine N-succinyltransferase family.

It carries out the reaction succinyl-CoA + L-arginine = N(2)-succinyl-L-arginine + CoA + H(+). The protein operates within amino-acid degradation; L-arginine degradation via AST pathway; L-glutamate and succinate from L-arginine: step 1/5. Its function is as follows. Catalyzes the transfer of succinyl-CoA to arginine to produce N(2)-succinylarginine. The sequence is that of Arginine N-succinyltransferase from Salmonella arizonae (strain ATCC BAA-731 / CDC346-86 / RSK2980).